A 340-amino-acid chain; its full sequence is tRNA-cytidine(32) 2-sulfurtransferase (340 aa).

Residues 74–79 (SGGKDS) carry the PP-loop motif motif. [4Fe-4S] cluster is bound by residues C149, C152, and C240.

It belongs to the TtcA family. In terms of assembly, homodimer. Mg(2+) serves as cofactor. The cofactor is [4Fe-4S] cluster.

Its subcellular location is the cytoplasm. It carries out the reaction cytidine(32) in tRNA + S-sulfanyl-L-cysteinyl-[cysteine desulfurase] + AH2 + ATP = 2-thiocytidine(32) in tRNA + L-cysteinyl-[cysteine desulfurase] + A + AMP + diphosphate + H(+). The protein operates within tRNA modification. Catalyzes the ATP-dependent 2-thiolation of cytidine in position 32 of tRNA, to form 2-thiocytidine (s(2)C32). The sulfur atoms are provided by the cysteine/cysteine desulfurase (IscS) system. The chain is tRNA-cytidine(32) 2-sulfurtransferase from Burkholderia ambifaria (strain MC40-6).